The sequence spans 372 residues: DNA replication and repair protein RecF (372 aa).

30-37 (GENAQGKT) contributes to the ATP binding site.

This sequence belongs to the RecF family.

Its subcellular location is the cytoplasm. Functionally, the RecF protein is involved in DNA metabolism; it is required for DNA replication and normal SOS inducibility. RecF binds preferentially to single-stranded, linear DNA. It also seems to bind ATP. This is DNA replication and repair protein RecF from Exiguobacterium sp. (strain ATCC BAA-1283 / AT1b).